We begin with the raw amino-acid sequence, 348 residues long: Lysophosphatidic acid receptor 2 (348 aa).

Topologically, residues 1 to 30 (MGHCYYNETIGFFYNNSGKELSSHWRPKDV) are extracellular. N-linked (GlcNAc...) asparagine glycosylation is found at Asn-7 and Asn-15. The chain crosses the membrane as a helical span at residues 31–51 (VVVALGLTVSVLVLLTNLLVI). Residues 52–66 (AAIASNRRFHQPIYY) lie on the Cytoplasmic side of the membrane. The chain crosses the membrane as a helical span at residues 67 to 87 (LLGNLAAADLFAGVAYLFLMF). The Extracellular segment spans residues 88–104 (HTGPRTARLSLEGWFLR). The helical transmembrane segment at 105-124 (QGLLDTSLTASVATLLAIAV) threads the bilayer. Residues 125 to 143 (ERRRSVMAVQLHSRLPRGR) are Cytoplasmic-facing. A helical membrane pass occupies residues 144 to 164 (VVMLIVGVWVAALGLGLLPAH). At 165-185 (SWHCLCALDRCSRMAPLLSRS) the chain is on the extracellular side. A helical transmembrane segment spans residues 186–206 (YLAVWALSSLLVFLLMVAVYT). Topologically, residues 207–239 (RIFFYVRRRVQRMAEHVSCHPRYRETTLSLVKT) are cytoplasmic. Residues 240 to 260 (VVIILGAFVVCWTPGQVVLLL) traverse the membrane as a helical segment. The Extracellular segment spans residues 261–276 (DGLGCKSCNVLAVEKY). The helical transmembrane segment at 277 to 294 (FLLLAEANSLVNAAVYSC) threads the bilayer. The Cytoplasmic portion of the chain corresponds to 295–348 (RDAEMRRTFRRLLCCACLRRSTRESAHYTSSAQGGASTRIMLPENGHPLMDSTL). Cys-308 carries the S-palmitoyl cysteine lipid modification. Residues 345 to 348 (DSTL) carry the PDZ-binding motif.

It belongs to the G-protein coupled receptor 1 family. Interacts with SLC9A3R2/NHERF2, MAGI3 and PLCB3. Interacts with RALA and GRK2.

Its subcellular location is the cell surface. It is found in the cell membrane. Its function is as follows. Receptor for lysophosphatidic acid (LPA), a mediator of diverse cellular activities. Seems to be coupled to the G(i)/G(o), G(12)/G(13), and G(q) families of heteromeric G proteins. Plays a key role in phospholipase C-beta (PLC-beta) signaling pathway. Stimulates phospholipase C (PLC) activity in a manner that is independent of RALA activation. The chain is Lysophosphatidic acid receptor 2 from Macaca fascicularis (Crab-eating macaque).